Reading from the N-terminus, the 245-residue chain is Leucyl/phenylalanyl-tRNA--protein transferase (245 aa).

Belongs to the L/F-transferase family.

The protein resides in the cytoplasm. The enzyme catalyses N-terminal L-lysyl-[protein] + L-leucyl-tRNA(Leu) = N-terminal L-leucyl-L-lysyl-[protein] + tRNA(Leu) + H(+). It carries out the reaction N-terminal L-arginyl-[protein] + L-leucyl-tRNA(Leu) = N-terminal L-leucyl-L-arginyl-[protein] + tRNA(Leu) + H(+). It catalyses the reaction L-phenylalanyl-tRNA(Phe) + an N-terminal L-alpha-aminoacyl-[protein] = an N-terminal L-phenylalanyl-L-alpha-aminoacyl-[protein] + tRNA(Phe). Functions in the N-end rule pathway of protein degradation where it conjugates Leu, Phe and, less efficiently, Met from aminoacyl-tRNAs to the N-termini of proteins containing an N-terminal arginine or lysine. This Paraburkholderia phymatum (strain DSM 17167 / CIP 108236 / LMG 21445 / STM815) (Burkholderia phymatum) protein is Leucyl/phenylalanyl-tRNA--protein transferase.